The sequence spans 292 residues: Expansin-B11 (292 aa).

Positions 1–27 (MAKSCTLVLLLVALVGLSLLVSPIACS) are cleaved as a signal peptide. N-linked (GlcNAc...) asparagine glycosylation is present at asparagine 51. The 111-residue stretch at 82 to 192 (GGACGYQTAV…RRVPCKYSGV (111 aa)) folds into the Expansin-like EG45 domain. Disulfide bonds link cysteine 85–cysteine 114, cysteine 117–cysteine 187, and cysteine 122–cysteine 128. The region spanning 205 to 287 (FYFEVLIEFE…SWKPGVTYRS (83 aa)) is the Expansin-like CBD domain.

This sequence belongs to the expansin family. Expansin B subfamily. Expressed in internodes.

The protein resides in the secreted. It is found in the cell wall. The protein localises to the membrane. In terms of biological role, may cause loosening and extension of plant cell walls by disrupting non-covalent bonding between cellulose microfibrils and matrix glucans. No enzymatic activity has been found. May be required for rapid internodal elongation in deepwater rice during submergence. The polypeptide is Expansin-B11 (EXPB11) (Oryza sativa subsp. japonica (Rice)).